The chain runs to 132 residues: Small ribosomal subunit protein uS8 (132 aa).

It belongs to the universal ribosomal protein uS8 family. In terms of assembly, part of the 30S ribosomal subunit. Contacts proteins S5 and S12.

In terms of biological role, one of the primary rRNA binding proteins, it binds directly to 16S rRNA central domain where it helps coordinate assembly of the platform of the 30S subunit. In Staphylococcus carnosus (strain TM300), this protein is Small ribosomal subunit protein uS8.